A 417-amino-acid chain; its full sequence is Serine hydroxymethyltransferase (417 aa).

(6S)-5,6,7,8-tetrahydrofolate contacts are provided by residues leucine 121 and 125–127 (GHL). An N6-(pyridoxal phosphate)lysine modification is found at lysine 229. 355 to 357 (SPF) serves as a coordination point for (6S)-5,6,7,8-tetrahydrofolate.

This sequence belongs to the SHMT family. In terms of assembly, homodimer. Requires pyridoxal 5'-phosphate as cofactor.

The protein localises to the cytoplasm. It catalyses the reaction (6R)-5,10-methylene-5,6,7,8-tetrahydrofolate + glycine + H2O = (6S)-5,6,7,8-tetrahydrofolate + L-serine. Its pathway is one-carbon metabolism; tetrahydrofolate interconversion. It participates in amino-acid biosynthesis; glycine biosynthesis; glycine from L-serine: step 1/1. Catalyzes the reversible interconversion of serine and glycine with tetrahydrofolate (THF) serving as the one-carbon carrier. This reaction serves as the major source of one-carbon groups required for the biosynthesis of purines, thymidylate, methionine, and other important biomolecules. Also exhibits THF-independent aldolase activity toward beta-hydroxyamino acids, producing glycine and aldehydes, via a retro-aldol mechanism. In Shewanella denitrificans (strain OS217 / ATCC BAA-1090 / DSM 15013), this protein is Serine hydroxymethyltransferase.